A 214-amino-acid polypeptide reads, in one-letter code: Cytolysin tenebrosin-B (214 aa).

A signal peptide spans 1–19; sequence MNRLIIVFIVVTMICAATA. Positions 20 to 35 are excised as a propeptide; the sequence is LSTKRRINKEEKDEKR. The segment at 38 to 47 is plays an important role in the hemolytic activity; the sequence is AVAGAVIEGA. An N-terminal region region spans residues 46 to 65; the sequence is GATLTFNVLQTVLKALGDIS. 7 residues coordinate phosphocholine: Ser-89, Val-122, Ser-140, Pro-142, Tyr-168, Tyr-172, and Tyr-173. A trp-rich region, which is important for the binding to lipid membrane region spans residues 140 to 155; the sequence is SIPFDYNLYSNWWNVK. Positions 179–181 match the Cell attachment site, crucial for protein stability motif; that stretch reads RGD.

Belongs to the actinoporin family. Sea anemone subfamily. As to quaternary structure, octamer or nonamer in membranes. Monomer in the soluble state.

It is found in the secreted. The protein resides in the nematocyst. The protein localises to the target cell membrane. Its function is as follows. Pore-forming protein that forms cations-selective hydrophilic pores of around 1 nm and causes cardiac stimulation and cytolysis. Pore formation is a multi-step process that involves specific recognition of membrane sphingomyelin (but neither cholesterol nor phosphatidylcholine) using aromatic rich region and adjacent phosphocholine (POC) binding site, firm binding to the membrane (mainly driven by hydrophobic interactions) accompanied by the transfer of the N-terminal region to the lipid-water interface and finally pore formation after oligomerization of monomers. The protein is Cytolysin tenebrosin-B of Actinia tenebrosa (Australian red waratah sea anemone).